The primary structure comprises 210 residues: ATP-dependent Clp protease proteolytic subunit (210 aa).

Serine 106 (nucleophile) is an active-site residue. Histidine 131 is a catalytic residue.

This sequence belongs to the peptidase S14 family. As to quaternary structure, fourteen ClpP subunits assemble into 2 heptameric rings which stack back to back to give a disk-like structure with a central cavity, resembling the structure of eukaryotic proteasomes.

Its subcellular location is the cytoplasm. The catalysed reaction is Hydrolysis of proteins to small peptides in the presence of ATP and magnesium. alpha-casein is the usual test substrate. In the absence of ATP, only oligopeptides shorter than five residues are hydrolyzed (such as succinyl-Leu-Tyr-|-NHMec, and Leu-Tyr-Leu-|-Tyr-Trp, in which cleavage of the -Tyr-|-Leu- and -Tyr-|-Trp bonds also occurs).. Cleaves peptides in various proteins in a process that requires ATP hydrolysis. Has a chymotrypsin-like activity. Plays a major role in the degradation of misfolded proteins. The chain is ATP-dependent Clp protease proteolytic subunit from Afipia carboxidovorans (strain ATCC 49405 / DSM 1227 / KCTC 32145 / OM5) (Oligotropha carboxidovorans).